The chain runs to 958 residues: N-terminal acetyltransferase B complex subunit NAA25 homolog (958 aa).

TPR repeat units follow at residues 7–42 (AVLE…HPNT), 78–111 (ELTL…DPSE), and 320–353 (FFAY…MLEY).

Belongs to the MDM20/NAA25 family. Component of the N-terminal acetyltransferase B (NatB) complex. Interacts with acer-1. As to expression, expressed in germline and somatic cells.

The protein resides in the cytoplasm. It is found in the nucleus. The protein localises to the chromosome. Its function is as follows. Non-catalytic subunit of the NatB complex which catalyzes acetylation of the N-terminal methionine residues of proteins beginning with Met-Asp or Met-Glu. Required for chromosome organization and arrangement; specifically for assembly of the central region components of the synaptonemal complex onto chromosomes during meiosis and for DNA double stranded break formation and repair. Acts downstream of xnd-1 to regulate levels of histone acetylation in germ and somatic cell nuclei by controlling acetyl-CoA production through antagonizing the acetyl-CoA hydrolase activity of acer-1. The chain is N-terminal acetyltransferase B complex subunit NAA25 homolog from Caenorhabditis elegans.